We begin with the raw amino-acid sequence, 291 residues long: DegV domain-containing protein CPE0026 (291 aa).

One can recognise a DegV domain in the interval 4–286 (FVIFTDSAAD…IGTLAVFFLG (283 aa)). Thr-63 and Ser-95 together coordinate hexadecanoate.

Functionally, may bind long-chain fatty acids, such as palmitate, and may play a role in lipid transport or fatty acid metabolism. The sequence is that of DegV domain-containing protein CPE0026 from Clostridium perfringens (strain 13 / Type A).